We begin with the raw amino-acid sequence, 674 residues long: DNA ligase (674 aa).

NAD(+) contacts are provided by residues 34–38, 83–84, and Glu-117; these read DFEFD and SL. The N6-AMP-lysine intermediate role is filled by Lys-119. NAD(+) contacts are provided by Arg-140, Glu-184, Lys-297, and Lys-321. 4 residues coordinate Zn(2+): Cys-415, Cys-418, Cys-433, and Cys-439. Residues 598-674 form the BRCT domain; sequence LVNNNFEGQS…IDEDEFERML (77 aa).

This sequence belongs to the NAD-dependent DNA ligase family. LigA subfamily. Mg(2+) is required as a cofactor. Requires Mn(2+) as cofactor.

It carries out the reaction NAD(+) + (deoxyribonucleotide)n-3'-hydroxyl + 5'-phospho-(deoxyribonucleotide)m = (deoxyribonucleotide)n+m + AMP + beta-nicotinamide D-nucleotide.. DNA ligase that catalyzes the formation of phosphodiester linkages between 5'-phosphoryl and 3'-hydroxyl groups in double-stranded DNA using NAD as a coenzyme and as the energy source for the reaction. It is essential for DNA replication and repair of damaged DNA. The polypeptide is DNA ligase (Chlorobaculum tepidum (strain ATCC 49652 / DSM 12025 / NBRC 103806 / TLS) (Chlorobium tepidum)).